The chain runs to 354 residues: Guanine nucleotide-binding protein G(i) subunit alpha-1 (354 aa).

G2 carries the N-myristoyl glycine lipid modification. A lipid anchor (S-palmitoyl cysteine) is attached at C3. The 323-residue stretch at 32-354 (REVKLLLLGA…KNNLKDCGLF (323 aa)) folds into the G-alpha domain. Residues 35-48 (KLLLLGAGESGKST) are G1 motif. GTP contacts are provided by residues 43–48 (ESGKST), 150–151 (DS), and 175–178 (LRTR). S47 is a Mg(2+) binding site. The interval 173-181 (DVLRTRVKT) is G2 motif. T181 contacts Mg(2+). The G3 motif stretch occupies residues 196–205 (FKMFDVGGQR). GTP is bound by residues 200 to 204 (DVGGQ), 269 to 272 (NKKD), and A326. Residues 265 to 272 (ILFLNKKD) form a G4 motif region. Residues 324–329 (TCATDT) form a G5 motif region.

Belongs to the G-alpha family. G(i/o/t/z) subfamily. In terms of assembly, heterotrimeric G proteins are composed of 3 units; alpha, beta and gamma. The alpha chain contains the guanine nucleotide binding site. Part of a spindle orientation complex. Identified in complex with the beta subunit GNB1 and the gamma subunit GNG1. Identified in complex with the beta subunit GNB1 and the gamma subunit GNG2. GTP binding causes dissociation of the heterotrimer, liberating the individual subunits so that they can interact with downstream effector proteins. In terms of processing, myristoylation at Gly-2 is required for membrane anchoring before palmitoylation. Post-translationally, palmitoylation at Cys-3 varies with membrane lipid composition.

Its subcellular location is the nucleus. It localises to the cytoplasm. It is found in the cell membrane. The protein localises to the cytoskeleton. The protein resides in the microtubule organizing center. Its subcellular location is the centrosome. It localises to the cell cortex. It is found in the membrane. The catalysed reaction is GTP + H2O = GDP + phosphate + H(+). Its function is as follows. Guanine nucleotide-binding proteins (G proteins) function as transducers downstream of G protein-coupled receptors (GPCRs) in numerous signaling cascades. The alpha chain contains the guanine nucleotide binding site and alternates between an active, GTP-bound state and an inactive, GDP-bound state. Signaling by an activated GPCR promotes GDP release and GTP binding. The alpha subunit has a low GTPase activity that converts bound GTP to GDP, thereby terminating the signal. Both GDP release and GTP hydrolysis are modulated by numerous regulatory proteins. Signaling is mediated via effector proteins, such as adenylate cyclase. Inhibits adenylate cyclase activity, leading to decreased intracellular cAMP levels. Required for cortical dynein-dynactin complex recruitment during metaphase. The polypeptide is Guanine nucleotide-binding protein G(i) subunit alpha-1 (gnai1) (Xenopus laevis (African clawed frog)).